The sequence spans 556 residues: MSSYGYDPFFPSYKRRYADSPRLHVSAMRSGGYSSARSAYSSLSAPVSSVSVRRSYATSSASGSLLHSVDSLDLSQVAAISNDLKSIRSQERAQLQDLNDRFACFIERVHELEQQNKVLEAELLVLRQKHAEPSRFRALYEQEIRELRLAAEEATSEKQALQGERESLEETLRGLQARYEEEVLSREDAEARLLEVRKGADEAGLARAELEKRVDSLLDELAFLKKVHEEELAELQAQIQYAHLSVEMDVSAKPDLSAALRDIRAQYEKLAARNMQNAEEWFRSRFTVLSESAAKNTDAVRAAKDEVSESRRLLKAKTLEIEATRGMNEALEKQLQELEEKQSADISALQDTINKLENELRTTKSEMARYLKEYQDLLNVKMALDIEIAAYRKLLEGEETRLSFTSVGSITSGYTQTAPTFGRSAYSGLQSTSYLMTTRSFPTYYSSHVQEEQIEIEETIEAAKAGEAKAAPAEEGEEEEKEEGEEEEAGGEEAEEEEEGAKEESEEGKEGEEEEGEETAAEDGEESQETAEETGEEEKEEKEAAGKEETEVKKKA.

Serine 2 carries the N-acetylserine modification. The head stretch occupies residues 2–94 (SSYGYDPFFP…KSIRSQERAQ (93 aa)). The IF rod domain occupies 91 to 402 (ERAQLQDLND…KLLEGEETRL (312 aa)). The segment at 95-126 (LQDLNDRFACFIERVHELEQQNKVLEAELLVL) is coil 1A. Positions 127 to 139 (RQKHAEPSRFRAL) are linker 1. Positions 140 to 235 (YEQEIRELRL…KVHEEELAEL (96 aa)) are coil 1B. Positions 236–254 (QAQIQYAHLSVEMDVSAKP) are linker 12. Residues 255 to 273 (DLSAALRDIRAQYEKLAAR) form a coil 2A region. Positions 274–282 (NMQNAEEWF) are linker 2. Residues 283-398 (RSRFTVLSES…AAYRKLLEGE (116 aa)) form a coil 2B region. The segment at 399-445 (ETRLSFTSVGSITSGYTQTAPTFGRSAYSGLQSTSYLMTTRSFPTYY) is tail, subdomain A. The tract at residues 399–556 (ETRLSFTSVG…KEETEVKKKA (158 aa)) is tail. Positions 446 to 556 (SSHVQEEQIE…KEETEVKKKA (111 aa)) are tail, subdomain B (acidic). A compositionally biased stretch (low complexity) spans 464–473 (KAGEAKAAPA). Residues 464-556 (KAGEAKAAPA…KEETEVKKKA (93 aa)) are disordered. Over residues 474 to 540 (EEGEEEEKEE…AEETGEEEKE (67 aa)) the composition is skewed to acidic residues. Basic and acidic residues predominate over residues 541-556 (EKEAAGKEETEVKKKA).

Belongs to the intermediate filament family. Forms homodimers (in vitro).

Its subcellular location is the cell projection. The protein localises to the axon. The protein resides in the cytoplasm. It is found in the cytoskeleton. In terms of biological role, neurofilaments usually contain three intermediate filament proteins: NEFL, NEFM, and NEFH which are involved in the maintenance of neuronal caliber. May additionally cooperate with the neuronal intermediate filament proteins to form neuronal filamentous networks. The chain is Neurofilament light polypeptide (NEFL) from Coturnix japonica (Japanese quail).